The sequence spans 254 residues: Undecaprenyl-diphosphatase (254 aa).

The next 8 helical transmembrane spans lie at Met-1–Val-21, Ala-41–Tyr-61, Leu-75–Gly-95, Leu-96–Val-116, Ile-130–Ile-150, Ala-174–Met-194, Thr-210–Val-230, and Asn-234–Leu-254.

The protein belongs to the UppP family.

It localises to the cell inner membrane. It catalyses the reaction di-trans,octa-cis-undecaprenyl diphosphate + H2O = di-trans,octa-cis-undecaprenyl phosphate + phosphate + H(+). In terms of biological role, catalyzes the dephosphorylation of undecaprenyl diphosphate (UPP). Confers resistance to bacitracin. The chain is Undecaprenyl-diphosphatase from Persephonella marina (strain DSM 14350 / EX-H1).